Consider the following 887-residue polypeptide: Inter-alpha-trypsin inhibitor heavy chain H3 (887 aa).

An N-terminal signal peptide occupies residues 1 to 21; the sequence is MVTLWWPCLVLALLSGLETSG. Positions 22–33 are excised as a propeptide; it reads FPRSPLRLLGKR. Residues 29–158 enclose the VIT domain; sequence LLGKRSLPEG…KVIFELTYEE (130 aa). N91 carries N-linked (GlcNAc...) asparagine glycosylation. The 161-residue stretch at 282–442 folds into the VWFA domain; sequence PKNIAFVIDV…YNFLESLALE (161 aa). N-linked (GlcNAc...) asparagine glycosylation is present at N580. D647 carries the aspartate 1-(chondroitin 4-sulfate)-ester modification. Residues 648 to 887 constitute a propeptide that is removed on maturation; the sequence is PHFIIQVPGK…HTDYIVPSLF (240 aa).

The protein belongs to the ITIH family. I-alpha-I plasma protease inhibitors are assembled from one or two heavy chains (HC) and one light chain, bikunin. Pre-alpha-inhibitor (P-alpha-I) is composed of ITIH3/HC3 and bikunin. Heavy chains are linked to bikunin via chondroitin 4-sulfate esterified to the alpha-carboxyl of the C-terminal aspartate after propeptide cleavage.

It is found in the secreted. May act as a carrier of hyaluronan in serum or as a binding protein between hyaluronan and other matrix protein, including those on cell surfaces in tissues to regulate the localization, synthesis and degradation of hyaluronan which are essential to cells undergoing biological processes. The chain is Inter-alpha-trypsin inhibitor heavy chain H3 (Itih3) from Rattus norvegicus (Rat).